Consider the following 334-residue polypeptide: D-alanine--D-alanine ligase (334 aa).

The ATP-grasp domain occupies 114 to 314 (KRIWRFEGLP…YEELCLRILA (201 aa)). An ATP-binding site is contributed by 140 to 195 (LEDLGSPMIVKPSREGSTIGLTKVTSPGQCEQAYRLASRYDPEVLCEQFIEGEETT). The Mg(2+) site is built by Asp-267, Glu-281, and Asn-283.

The protein belongs to the D-alanine--D-alanine ligase family. It depends on Mg(2+) as a cofactor. Mn(2+) is required as a cofactor.

Its subcellular location is the cytoplasm. The enzyme catalyses 2 D-alanine + ATP = D-alanyl-D-alanine + ADP + phosphate + H(+). The protein operates within cell wall biogenesis; peptidoglycan biosynthesis. Cell wall formation. The polypeptide is D-alanine--D-alanine ligase (Paracidovorax citrulli (strain AAC00-1) (Acidovorax citrulli)).